The sequence spans 359 residues: Peptide methionine sulfoxide reductase MsrA/MsrB (359 aa).

Positions 36–189 (RVIYLAGGCF…PGGYCHIDLK (154 aa)) are peptide methionine sulfoxide reductase A. Cysteine 44 is an active-site residue. Residues 206–329 (DEVLKKKLTK…NSAALRFIPL (124 aa)) enclose the MsrB domain. The Nucleophile role is filled by cysteine 318.

The protein in the N-terminal section; belongs to the MsrA Met sulfoxide reductase family. This sequence in the C-terminal section; belongs to the MsrB Met sulfoxide reductase family.

The enzyme catalyses L-methionyl-[protein] + [thioredoxin]-disulfide + H2O = L-methionyl-(S)-S-oxide-[protein] + [thioredoxin]-dithiol. It catalyses the reaction [thioredoxin]-disulfide + L-methionine + H2O = L-methionine (S)-S-oxide + [thioredoxin]-dithiol. It carries out the reaction L-methionyl-[protein] + [thioredoxin]-disulfide + H2O = L-methionyl-(R)-S-oxide-[protein] + [thioredoxin]-dithiol. Functionally, has an important function as a repair enzyme for proteins that have been inactivated by oxidation. Catalyzes the reversible oxidation-reduction of methionine sulfoxide in proteins to methionine. The sequence is that of Peptide methionine sulfoxide reductase MsrA/MsrB (msrAB) from Helicobacter pylori (strain J99 / ATCC 700824) (Campylobacter pylori J99).